We begin with the raw amino-acid sequence, 21 residues long: Fibrinogen beta chain (21 aa).

Pyrrolidone carboxylic acid is present on Gln1. The segment covering 1 to 11 has biased composition (acidic residues); it reads QHSTDYDEEEE. The segment at 1–21 is disordered; that stretch reads QHSTDYDEEEEDRAKLHLDAR. An O-linked (GalNAc...) threonine glycan is attached at Thr4. Position 6 is a sulfotyrosine (Tyr6). Positions 12–21 are enriched in basic and acidic residues; that stretch reads DRAKLHLDAR.

As to quaternary structure, heterohexamer; disulfide linked. Contains 2 sets of 3 non-identical chains (alpha, beta and gamma). The 2 heterotrimers are in head to head conformation with the N-termini in a small central domain. Conversion of fibrinogen to fibrin is triggered by thrombin, which cleaves fibrinopeptides A and B from alpha and beta chains, and thus exposes the N-terminal polymerization sites responsible for the formation of the soft clot.

The protein resides in the secreted. In terms of biological role, cleaved by the protease thrombin to yield monomers which, together with fibrinogen alpha (FGA) and fibrinogen gamma (FGG), polymerize to form an insoluble fibrin matrix. Fibrin has a major function in hemostasis as one of the primary components of blood clots. In addition, functions during the early stages of wound repair to stabilize the lesion and guide cell migration during re-epithelialization. Was originally thought to be essential for platelet aggregation, based on in vitro studies using anticoagulated blood. However subsequent studies have shown that it is not absolutely required for thrombus formation in vivo. Enhances expression of SELP in activated platelets. Maternal fibrinogen is essential for successful pregnancy. Fibrin deposition is also associated with infection, where it protects against IFNG-mediated hemorrhage. May also facilitate the antibacterial immune response via both innate and T-cell mediated pathways. The sequence is that of Fibrinogen beta chain (FGB) from Cervus elaphus (Red deer).